Here is a 421-residue protein sequence, read N- to C-terminus: UDP-N-acetylglucosamine 1-carboxyvinyltransferase (421 aa).

Residue 22 to 23 (KN) participates in phosphoenolpyruvate binding. Arg-92 is a UDP-N-acetyl-alpha-D-glucosamine binding site. The Proton donor role is filled by Cys-116. Position 116 is a 2-(S-cysteinyl)pyruvic acid O-phosphothioketal (Cys-116). Residues 121 to 125 (RPVDQ), Asp-308, and Ile-330 contribute to the UDP-N-acetyl-alpha-D-glucosamine site.

The protein belongs to the EPSP synthase family. MurA subfamily.

The protein localises to the cytoplasm. The enzyme catalyses phosphoenolpyruvate + UDP-N-acetyl-alpha-D-glucosamine = UDP-N-acetyl-3-O-(1-carboxyvinyl)-alpha-D-glucosamine + phosphate. It participates in cell wall biogenesis; peptidoglycan biosynthesis. In terms of biological role, cell wall formation. Adds enolpyruvyl to UDP-N-acetylglucosamine. The polypeptide is UDP-N-acetylglucosamine 1-carboxyvinyltransferase (Ralstonia nicotianae (strain ATCC BAA-1114 / GMI1000) (Ralstonia solanacearum)).